An 88-amino-acid polypeptide reads, in one-letter code: Small ribosomal subunit protein bS20 (88 aa).

Disordered regions lie at residues methionine 1–arginine 25 and glycine 61–alanine 88.

Belongs to the bacterial ribosomal protein bS20 family.

In terms of biological role, binds directly to 16S ribosomal RNA. This is Small ribosomal subunit protein bS20 from Jannaschia sp. (strain CCS1).